Here is a 458-residue protein sequence, read N- to C-terminus: Bone morphogenetic protein 3 (458 aa).

An N-terminal signal peptide occupies residues 1–23 (MAECRPWLVLWVGCCGCLCLALG). Positions 24–348 (ELLNDGLLAV…EQTLKKARRK (325 aa)) are excised as a propeptide. N107 carries an N-linked (GlcNAc...) asparagine glycan. 2 disordered regions span residues 244–275 (DSVV…KKRS) and 303–335 (ERKP…SQTL). Over residues 320 to 329 (NKKKLRKGSR) the composition is skewed to basic residues. Cystine bridges form between C356-C423, C385-C455, and C389-C457. N-linked (GlcNAc...) asparagine glycosylation is present at N449.

This sequence belongs to the TGF-beta family. Homodimer. Can form heterodimers with ADMP, BMP-2-I and/or BMP-2-II, and DERRIERE.

Its subcellular location is the secreted. Its function is as follows. Dorsalizing factor. Antagonizes mesoderm formation by ventralizing BMPs. The sequence is that of Bone morphogenetic protein 3 (bmp3) from Xenopus laevis (African clawed frog).